A 122-amino-acid chain; its full sequence is Small ribosomal subunit protein uS13 (122 aa).

Positions 97 to 114 are enriched in basic residues; the sequence is PVRGQRTHTNAKTRKGKS. The tract at residues 97–122 is disordered; the sequence is PVRGQRTHTNAKTRKGKSRLPIAGKE.

It belongs to the universal ribosomal protein uS13 family. In terms of assembly, part of the 30S ribosomal subunit. Forms a loose heterodimer with protein S19. Forms two bridges to the 50S subunit in the 70S ribosome.

Located at the top of the head of the 30S subunit, it contacts several helices of the 16S rRNA. In the 70S ribosome it contacts the 23S rRNA (bridge B1a) and protein L5 of the 50S subunit (bridge B1b), connecting the 2 subunits; these bridges are implicated in subunit movement. Contacts the tRNAs in the A and P-sites. This Wolbachia sp. subsp. Brugia malayi (strain TRS) protein is Small ribosomal subunit protein uS13.